The sequence spans 610 residues: UvrABC system protein C (610 aa).

One can recognise a GIY-YIG domain in the interval 16–94; it reads SQPGVYRMYD…IKLYQPRYNV (79 aa). The 36-residue stretch at 204–239 folds into the UVR domain; the sequence is QQVLTRLIERMEQASQQLKFEDAARYRDQIQAVRQV.

This sequence belongs to the UvrC family. Interacts with UvrB in an incision complex.

It localises to the cytoplasm. In terms of biological role, the UvrABC repair system catalyzes the recognition and processing of DNA lesions. UvrC both incises the 5' and 3' sides of the lesion. The N-terminal half is responsible for the 3' incision and the C-terminal half is responsible for the 5' incision. The polypeptide is UvrABC system protein C (Photorhabdus laumondii subsp. laumondii (strain DSM 15139 / CIP 105565 / TT01) (Photorhabdus luminescens subsp. laumondii)).